The sequence spans 333 residues: Casein kinase II subunit alpha-2 (333 aa).

A Protein kinase domain is found at 34–319; the sequence is YEVVRKVGRG…AREAMAHPYF (286 aa). Residues 40 to 48 and K63 contribute to the ATP site; that span reads VGRGKYSEV. The Proton acceptor role is filled by D151.

This sequence belongs to the protein kinase superfamily. Ser/Thr protein kinase family. CK2 subfamily. In terms of assembly, monomer. In terms of processing, autophosphorylated.

It localises to the cytoplasm. It catalyses the reaction L-seryl-[protein] + ATP = O-phospho-L-seryl-[protein] + ADP + H(+). The enzyme catalyses L-threonyl-[protein] + ATP = O-phospho-L-threonyl-[protein] + ADP + H(+). Functionally, casein kinases are operationally defined by their preferential utilization of acidic proteins such as caseins as substrates. It can phosphorylate a large number of proteins. Involved in photoperiod sensitivity (PS). Increases days-to-heading under natural day (ND) and long day (LD) conditions, but not under short day (SD) conditions. In Oryza sativa subsp. indica (Rice), this protein is Casein kinase II subunit alpha-2.